The following is a 436-amino-acid chain: Glucose-1-phosphate adenylyltransferase (436 aa).

Alpha-D-glucose 1-phosphate contacts are provided by residues Tyr-112, Gly-178, 193–194 (EK), and Ser-211.

The protein belongs to the bacterial/plant glucose-1-phosphate adenylyltransferase family. In terms of assembly, homotetramer.

The catalysed reaction is alpha-D-glucose 1-phosphate + ATP + H(+) = ADP-alpha-D-glucose + diphosphate. It functions in the pathway glycan biosynthesis; glycogen biosynthesis. Its function is as follows. Involved in the biosynthesis of ADP-glucose, a building block required for the elongation reactions to produce glycogen. Catalyzes the reaction between ATP and alpha-D-glucose 1-phosphate (G1P) to produce pyrophosphate and ADP-Glc. The sequence is that of Glucose-1-phosphate adenylyltransferase from Histophilus somni (strain 129Pt) (Haemophilus somnus).